The chain runs to 733 residues: Phosphoribosylformylglycinamidine synthase subunit PurL (733 aa).

H41 is a catalytic residue. ATP is bound by residues Y44 and K83. E85 serves as a coordination point for Mg(2+). Substrate-binding positions include S86 to H89 and R108. Catalysis depends on H87, which acts as the Proton acceptor. D109 contributes to the Mg(2+) binding site. The disordered stretch occupies residues G212–Q232. Residue Q232 coordinates substrate. D260 is a Mg(2+) binding site. E304–Q306 contributes to the substrate binding site. D488 and G525 together coordinate ATP. N526 is a Mg(2+) binding site. S528 provides a ligand contact to substrate.

This sequence belongs to the FGAMS family. In terms of assembly, monomer. Part of the FGAM synthase complex composed of 1 PurL, 1 PurQ and 2 PurS subunits.

It localises to the cytoplasm. The catalysed reaction is N(2)-formyl-N(1)-(5-phospho-beta-D-ribosyl)glycinamide + L-glutamine + ATP + H2O = 2-formamido-N(1)-(5-O-phospho-beta-D-ribosyl)acetamidine + L-glutamate + ADP + phosphate + H(+). It participates in purine metabolism; IMP biosynthesis via de novo pathway; 5-amino-1-(5-phospho-D-ribosyl)imidazole from N(2)-formyl-N(1)-(5-phospho-D-ribosyl)glycinamide: step 1/2. In terms of biological role, part of the phosphoribosylformylglycinamidine synthase complex involved in the purines biosynthetic pathway. Catalyzes the ATP-dependent conversion of formylglycinamide ribonucleotide (FGAR) and glutamine to yield formylglycinamidine ribonucleotide (FGAM) and glutamate. The FGAM synthase complex is composed of three subunits. PurQ produces an ammonia molecule by converting glutamine to glutamate. PurL transfers the ammonia molecule to FGAR to form FGAM in an ATP-dependent manner. PurS interacts with PurQ and PurL and is thought to assist in the transfer of the ammonia molecule from PurQ to PurL. This chain is Phosphoribosylformylglycinamidine synthase subunit PurL, found in Thermoanaerobacter sp. (strain X514).